A 252-amino-acid chain; its full sequence is Ribosomal RNA small subunit methyltransferase J (252 aa).

Residues 101–102, 117–118, 153–154, and D171 each bind S-adenosyl-L-methionine; these read RD, ER, and SS.

This sequence belongs to the methyltransferase superfamily. RsmJ family.

It localises to the cytoplasm. The enzyme catalyses guanosine(1516) in 16S rRNA + S-adenosyl-L-methionine = N(2)-methylguanosine(1516) in 16S rRNA + S-adenosyl-L-homocysteine + H(+). In terms of biological role, specifically methylates the guanosine in position 1516 of 16S rRNA. In Salmonella dublin (strain CT_02021853), this protein is Ribosomal RNA small subunit methyltransferase J.